The chain runs to 484 residues: D-aminoacylase (484 aa).

This sequence belongs to the metallo-dependent hydrolases superfamily. N-acyl-D-amino-acid deacylase family. Zn(2+) serves as cofactor.

The protein localises to the cytoplasm. The catalysed reaction is an N-acyl-D-amino acid + H2O = a D-alpha-amino acid + a carboxylate. Functionally, has a wide specificity; hydrolyzes N-acyl derivative of neutral D-amino acids. In Alcaligenes xylosoxydans xylosoxydans (Achromobacter xylosoxidans), this protein is D-aminoacylase (dan).